Consider the following 347-residue polypeptide: 3',5'-bisphosphate nucleotidase 2 (347 aa).

The active-site Proton acceptor is the aspartate 46. Residues glutamate 71, aspartate 134, isoleucine 136, and aspartate 137 each coordinate Mg(2+). The Proton acceptor role is filled by threonine 139. The adenosine 3',5'-bisphosphate site is built by threonine 139, serine 255, lysine 258, arginine 272, and aspartate 284. The AMP site is built by serine 255, lysine 258, arginine 272, and aspartate 284. Mg(2+) is bound at residue aspartate 284.

Belongs to the inositol monophosphatase superfamily. The cofactor is Mg(2+). Very low expression in roots, leaves, stems, flowers and siliques.

The catalysed reaction is adenosine 3',5'-bisphosphate + H2O = AMP + phosphate. It carries out the reaction 3'-phosphoadenylyl sulfate + H2O = adenosine 5'-phosphosulfate + phosphate. The enzyme catalyses 1D-myo-inositol 1,4-bisphosphate + H2O = 1D-myo-inositol 4-phosphate + phosphate. It functions in the pathway signal transduction; phosphatidylinositol signaling pathway. Inhibited by Li(+) (IC(50)=10 mM), Na(+) (IC(50)=200 mM) and Ca(2+) (IC(50)=0.03 mM). Its function is as follows. Phosphatase that converts adenosine 3'-phosphate 5'-phosphosulfate (PAPS) to adenosine 5'-phosphosulfate (APS) and 3'-phosphoadenosine 5'-phosphate (3'-PAP) to AMP. May regulate the flux of sulfur in the sulfur-activation pathway by converting PAPS to APS. Prevents both the toxicity of PAP on RNA processing enzymes as well as the product inhibition by PAP of sulfate conjugation. Is also able to hydrolyze inositol 1,4-bisphosphate. This is 3',5'-bisphosphate nucleotidase 2 from Arabidopsis thaliana (Mouse-ear cress).